The primary structure comprises 951 residues: Leucine-rich repeat-containing G-protein coupled receptor 4 (951 aa).

Residues 1–24 form the signal peptide; sequence MPGPLGLLCFLALGLLGSAGPSGA. The LRRNT domain maps to 25–57; that stretch reads APPLCAAPCSCDGDRRVDCSGKGLTAVPEGLSA. At 25 to 544 the chain is on the extracellular side; that stretch reads APPLCAAPCS…LLGSWMIRLT (520 aa). Cystine bridges form between cysteine 29–cysteine 35 and cysteine 33–cysteine 43. 10 LRR repeats span residues 58-79, 82-103, 106-127, 130-151, 154-177, 178-199, 202-223, 226-247, 249-270, and 273-294; these read FTQA…AFKN, FLEE…ALSG, ELKV…AIRG, ALQS…SFEG, QLRH…SNLP, TLQA…AFTN, SLVV…CFDG, NLET…IKAL, SLKE…AFDG, and LLRT…AFHN. A glycan (N-linked (GlcNAc...) asparagine) is linked at asparagine 68. Asparagine 199 carries an N-linked (GlcNAc...) asparagine glycan. N-linked (GlcNAc...) asparagine glycosylation is found at asparagine 294 and asparagine 314. LRR repeat units follow at residues 320–341, 344–365, 366–387, 390–411, and 414–435; these read HLES…LCQE, MLRT…NGCH, ALEE…TFQG, SLRI…AFAT, and PITN…GLNG. Cysteines 339 and 364 form a disulfide. Intrachain disulfides connect cysteine 470-cysteine 522 and cysteine 471-cysteine 476. The N-linked (GlcNAc...) asparagine glycan is linked to asparagine 505. Residues 545 to 565 traverse the membrane as a helical segment; sequence VWFIFLVALFFNLLVILTTFA. Residues 566-575 lie on the Cytoplasmic side of the membrane; that stretch reads SCTSLPSSKL. A helical transmembrane segment spans residues 576–596; that stretch reads FIGLISVSNLFMGIYTGILTF. The Extracellular portion of the chain corresponds to 597–620; that stretch reads LDAVSWGRFAEFGIWWETGSGCKV. The cysteines at positions 618 and 693 are disulfide-linked. A helical membrane pass occupies residues 621-641; that stretch reads AGFLAVFSSESAIFLLMLATV. At 642–661 the chain is on the cytoplasmic side; that stretch reads ERSLSAKDIMKNGKSNHLKQ. The helical transmembrane segment at 662–682 threads the bilayer; that stretch reads FRVAALLAFLGATVAGCFPLF. At 683–703 the chain is on the extracellular side; the sequence is HRGEYSASPLCLPFPTGETPS. A helical transmembrane segment spans residues 704–724; sequence LGFTVTLVLLNSLAFLLMAVI. At 725 to 756 the chain is on the cytoplasmic side; the sequence is YTKLYCNLEKEDLSENSQSSMIKHVAWLIFTN. Residues 757-777 traverse the membrane as a helical segment; that stretch reads CIFFCPVAFFSFAPLITAISI. Topologically, residues 778–783 are extracellular; that stretch reads SPEIMK. Residues 784-804 form a helical membrane-spanning segment; that stretch reads SVTLIFFPLPACLNPVLYVFF. The Cytoplasmic portion of the chain corresponds to 805-951; sequence NPKFKEDWKL…YAYNLPRVKD (147 aa). Phosphoserine is present on serine 920.

The protein belongs to the G-protein coupled receptor 1 family. Expressed in multiple steroidogenic tissues: placenta, ovary, testis and adrenal. Expressed also in spinal cord, thyroid, stomach, trachea, heart, pancreas, kidney, prostate and spleen.

Its subcellular location is the cell membrane. In terms of biological role, receptor for R-spondins that potentiates the canonical Wnt signaling pathway and is involved in the formation of various organs. Upon binding to R-spondins (RSPO1, RSPO2, RSPO3 or RSPO4), associates with phosphorylated LRP6 and frizzled receptors that are activated by extracellular Wnt receptors, triggering the canonical Wnt signaling pathway to increase expression of target genes. In contrast to classical G-protein coupled receptors, does not activate heterotrimeric G-proteins to transduce the signal. Its function as activator of the Wnt signaling pathway is required for the development of various organs, including liver, kidney, intestine, bone, reproductive tract and eye. May also act as a receptor for norrin (NDP), such results however require additional confirmation in vivo. Required during spermatogenesis to activate the Wnt signaling pathway in peritubular myoid cells. Required for the maintenance of intestinal stem cells and Paneth cell differentiation in postnatal intestinal crypts. Acts as a regulator of bone formation and remodeling. Involved in kidney development; required for maintaining the ureteric bud in an undifferentiated state. Involved in the development of the anterior segment of the eye. Required during erythropoiesis. Also acts as a negative regulator of innate immunity by inhibiting TLR2/TLR4 associated pattern-recognition and pro-inflammatory cytokine production. Plays an important role in regulating the circadian rhythms of plasma lipids, partially through regulating the rhythmic expression of MTTP. Required for proper development of GnRH neurons (gonadotropin-releasing hormone expressing neurons) that control the release of reproductive hormones from the pituitary gland. The sequence is that of Leucine-rich repeat-containing G-protein coupled receptor 4 (LGR4) from Homo sapiens (Human).